A 233-amino-acid chain; its full sequence is Large ribosomal subunit protein uL1 (233 aa).

This sequence belongs to the universal ribosomal protein uL1 family. Part of the 50S ribosomal subunit.

Binds directly to 23S rRNA. The L1 stalk is quite mobile in the ribosome, and is involved in E site tRNA release. Its function is as follows. Protein L1 is also a translational repressor protein, it controls the translation of the L11 operon by binding to its mRNA. This is Large ribosomal subunit protein uL1 from Aeromonas hydrophila subsp. hydrophila (strain ATCC 7966 / DSM 30187 / BCRC 13018 / CCUG 14551 / JCM 1027 / KCTC 2358 / NCIMB 9240 / NCTC 8049).